The sequence spans 273 residues: Tryptophan synthase alpha chain (273 aa).

Catalysis depends on proton acceptor residues glutamate 49 and aspartate 60.

Belongs to the TrpA family. As to quaternary structure, tetramer of two alpha and two beta chains.

It catalyses the reaction (1S,2R)-1-C-(indol-3-yl)glycerol 3-phosphate + L-serine = D-glyceraldehyde 3-phosphate + L-tryptophan + H2O. The protein operates within amino-acid biosynthesis; L-tryptophan biosynthesis; L-tryptophan from chorismate: step 5/5. Its function is as follows. The alpha subunit is responsible for the aldol cleavage of indoleglycerol phosphate to indole and glyceraldehyde 3-phosphate. This chain is Tryptophan synthase alpha chain, found in Halorhodospira halophila (strain DSM 244 / SL1) (Ectothiorhodospira halophila (strain DSM 244 / SL1)).